A 1182-amino-acid chain; its full sequence is Phosphatidylinositol 3-kinase age-1 (1182 aa).

Residues 1 to 16 (MSMGRSPSTTFRSRTG) show a composition bias toward polar residues. The disordered stretch occupies residues 1-24 (MSMGRSPSTTFRSRTGSHGARDLI). Positions 74–174 (NEGVADIITM…FPMLFLYQPD (101 aa)) constitute a PI3K-ABD domain. In terms of domain architecture, PI3K-RBD spans 266-358 (KRKAEINGVC…YRCPGFVVRR (93 aa)). Positions 425–577 (LDANLMIRPV…SSYGGRVRMP (153 aa)) constitute a C2 PI3K-type domain. Residues 601–788 (DDYESCIRDP…SLLMEAYLRG (188 aa)) enclose the PIK helical domain. Positions 853 to 1168 (IIDKAIVLGS…IYEEAFNGSW (316 aa)) constitute a PI3K/PI4K catalytic domain. Residues 859–865 (VLGSAKR) form a G-loop region. The segment at 1028–1036 (GIKDRHSDN) is catalytic loop. Residues 1047–1073 (HIDFGHILGHGKTKLGIQRDRQPFILT) are activation loop.

It belongs to the PI3/PI4-kinase family.

It carries out the reaction a 1,2-diacyl-sn-glycero-3-phospho-(1D-myo-inositol) + ATP = a 1,2-diacyl-sn-glycero-3-phospho-(1D-myo-inositol-3-phosphate) + ADP + H(+). Functionally, phosphatidylinositol 3-kinase homolog that regulates longevity and diapause. Promotes cell survival during embryonic development by recruiting akt-1/2 to the plasma membrane through the production of PtdIns(3,4,5)P3. Could function in the development or neuroendocrine signaling of the dauer pathway. Mediates susceptibility to enteropathogenic E.coli infection. May negatively regulate AYI interneuron neurite outgrowth. Plays a role in aversive olfactory learning when an odor is associated with food deprivation. Regulates this process by promoting the nuclear relocalization of egl-4 in AWC olfactory neurons after odor conditioning. In Caenorhabditis elegans, this protein is Phosphatidylinositol 3-kinase age-1.